We begin with the raw amino-acid sequence, 263 residues long: MITVNTLQKMKAAGEKIVMLTAYESSFAALMDDAGVDVLLVGDSLGMAVQGRQSTLPVSLRDMCYHTECVARGAKNAMIVSDLPFGAYQQSKEQAFAAAAELMAAGAHMVKLEGGVWMAETTEFLQMRGIPVCAHIGLTPQSVFAFGGYKVQGRGGKAQALLNDAKAHDEAGAAVVLMECVPAELAKKVTETVSCPTIGIGAGADCDGQVLVMHDMLGIFPGKTAKFVKNFMRGQSSIQAAVRAYVAEVKAKTFPAAEHIFAD.

Mg(2+)-binding residues include D43 and D82. Residues 43–44 (DS), D82, and K111 contribute to the 3-methyl-2-oxobutanoate site. E113 contacts Mg(2+). Residue E179 is the Proton acceptor of the active site.

The protein belongs to the PanB family. Homodecamer; pentamer of dimers. It depends on Mg(2+) as a cofactor.

The protein resides in the cytoplasm. It catalyses the reaction 3-methyl-2-oxobutanoate + (6R)-5,10-methylene-5,6,7,8-tetrahydrofolate + H2O = 2-dehydropantoate + (6S)-5,6,7,8-tetrahydrofolate. It participates in cofactor biosynthesis; (R)-pantothenate biosynthesis; (R)-pantoate from 3-methyl-2-oxobutanoate: step 1/2. Its function is as follows. Catalyzes the reversible reaction in which hydroxymethyl group from 5,10-methylenetetrahydrofolate is transferred onto alpha-ketoisovalerate to form ketopantoate. In Neisseria gonorrhoeae (strain ATCC 700825 / FA 1090), this protein is 3-methyl-2-oxobutanoate hydroxymethyltransferase.